Here is a 440-residue protein sequence, read N- to C-terminus: L-seryl-tRNA(Sec) selenium transferase (440 aa).

An N6-(pyridoxal phosphate)lysine modification is found at Lys282.

It belongs to the SelA family. Requires pyridoxal 5'-phosphate as cofactor.

The protein localises to the cytoplasm. The enzyme catalyses L-seryl-tRNA(Sec) + selenophosphate + H(+) = L-selenocysteinyl-tRNA(Sec) + phosphate. It participates in aminoacyl-tRNA biosynthesis; selenocysteinyl-tRNA(Sec) biosynthesis; selenocysteinyl-tRNA(Sec) from L-seryl-tRNA(Sec) (bacterial route): step 1/1. Functionally, converts seryl-tRNA(Sec) to selenocysteinyl-tRNA(Sec) required for selenoprotein biosynthesis. The sequence is that of L-seryl-tRNA(Sec) selenium transferase from Campylobacter jejuni subsp. jejuni serotype O:2 (strain ATCC 700819 / NCTC 11168).